The sequence spans 266 residues: Glucosamine-6-phosphate deaminase (266 aa).

The Proton acceptor; for enolization step role is filled by aspartate 72. Aspartate 141 (for ring-opening step) is an active-site residue. Residue histidine 143 is the Proton acceptor; for ring-opening step of the active site. The active-site For ring-opening step is glutamate 148.

Belongs to the glucosamine/galactosamine-6-phosphate isomerase family. NagB subfamily. Homohexamer.

It carries out the reaction alpha-D-glucosamine 6-phosphate + H2O = beta-D-fructose 6-phosphate + NH4(+). It functions in the pathway amino-sugar metabolism; N-acetylneuraminate degradation; D-fructose 6-phosphate from N-acetylneuraminate: step 5/5. Its activity is regulated as follows. Allosterically activated by N-acetylglucosamine 6-phosphate (GlcNAc6P). Its function is as follows. Catalyzes the reversible isomerization-deamination of glucosamine 6-phosphate (GlcN6P) to form fructose 6-phosphate (Fru6P) and ammonium ion. This is Glucosamine-6-phosphate deaminase from Salmonella arizonae (strain ATCC BAA-731 / CDC346-86 / RSK2980).